The following is a 219-amino-acid chain: Probable nicotinate-nucleotide adenylyltransferase (219 aa).

It belongs to the NadD family.

It catalyses the reaction nicotinate beta-D-ribonucleotide + ATP + H(+) = deamido-NAD(+) + diphosphate. It functions in the pathway cofactor biosynthesis; NAD(+) biosynthesis; deamido-NAD(+) from nicotinate D-ribonucleotide: step 1/1. Functionally, catalyzes the reversible adenylation of nicotinate mononucleotide (NaMN) to nicotinic acid adenine dinucleotide (NaAD). This is Probable nicotinate-nucleotide adenylyltransferase from Enterococcus faecalis (strain ATCC 700802 / V583).